The primary structure comprises 151 residues: Ribosome maturation factor RimP (151 aa).

This sequence belongs to the RimP family.

The protein resides in the cytoplasm. Required for maturation of 30S ribosomal subunits. The sequence is that of Ribosome maturation factor RimP from Aliivibrio salmonicida (strain LFI1238) (Vibrio salmonicida (strain LFI1238)).